Consider the following 124-residue polypeptide: Cytochrome c2 (124 aa).

Q1 carries the post-translational modification Pyrrolidone carboxylic acid. Heme c contacts are provided by C16, C19, H20, and M85.

This sequence belongs to the cytochrome c family. Post-translationally, binds 1 heme c group covalently per subunit.

The protein localises to the periplasm. In terms of biological role, cytochrome c2 is found mainly in purple, non-sulfur, photosynthetic bacteria where it functions as the electron donor to the oxidized bacteriochlorophyll in the photophosphorylation pathway. However, it may also have a role in the respiratory chain and is found in some non-photosynthetic bacteria. The sequence is that of Cytochrome c2 from Afifella marina (Rhodobium marinum).